The chain runs to 486 residues: MISSETKHMQNYINGKWVDAKSGKQEVIPNPATGETIATVTISDVEDVDMAVAAAKEVFPEWSDIPVPNRTRYLLDYWKLLQDNKEELAKIITLENGKSLRDAQGEVQRGIEVVELATSTPSMMMGDALPSIAKGIDGSIWRYPLGVVAGITPFNFPMMVPLWMFPLAIACGNTFVLKTSERTPILAERLVELFYEAGFPKGVLNLVHGGKEVVNRFLTHPDIEAVSFVGSEPVAKHVYQTGTAHGKRVQALAGAKNHAVVMPDCDVEKTIQGVLGAAFGSSGERCMACSVVAVVDDIADEFLEKLVKETKKLRVGDGMDDSNFIGPVIRESHKERVLSYIDSGVDEGAHLLVDGRKIKEETPDGYYVGATIFDHVTQDMKIWQDEIFAPVLSVVRVSDLEEGIRVTNQSKFANGAVIYTNSGKSAQQFRNRIDAGMIGVNVNVPAPMAFFSFAGNKASFYGDLGTNGKDGVQFYTRKKVVTERWF.

NAD(+) is bound by residues Phe154, Lys178, Glu181, Arg182, and Ser231. The active-site Nucleophile is Cys286. Glu386 serves as a coordination point for NAD(+).

Belongs to the aldehyde dehydrogenase family. IolA subfamily. As to quaternary structure, homotetramer.

The enzyme catalyses 3-oxopropanoate + NAD(+) + CoA + H2O = hydrogencarbonate + acetyl-CoA + NADH + H(+). It catalyses the reaction 2-methyl-3-oxopropanoate + NAD(+) + CoA + H2O = propanoyl-CoA + hydrogencarbonate + NADH + H(+). It functions in the pathway polyol metabolism; myo-inositol degradation into acetyl-CoA; acetyl-CoA from myo-inositol: step 7/7. Its function is as follows. Catalyzes the oxidation of malonate semialdehyde (MSA) and methylmalonate semialdehyde (MMSA) into acetyl-CoA and propanoyl-CoA, respectively. Is involved in a myo-inositol catabolic pathway. Bicarbonate, and not CO2, is the end-product of the enzymatic reaction. This is Malonate-semialdehyde dehydrogenase 1 from Oceanobacillus iheyensis (strain DSM 14371 / CIP 107618 / JCM 11309 / KCTC 3954 / HTE831).